Here is a 433-residue protein sequence, read N- to C-terminus: Serine hydroxymethyltransferase (433 aa).

Residues Leu-132 and 136–138 (GHL) contribute to the (6S)-5,6,7,8-tetrahydrofolate site. Lys-241 is subject to N6-(pyridoxal phosphate)lysine.

This sequence belongs to the SHMT family. Homodimer. Requires pyridoxal 5'-phosphate as cofactor.

It localises to the cytoplasm. The enzyme catalyses (6R)-5,10-methylene-5,6,7,8-tetrahydrofolate + glycine + H2O = (6S)-5,6,7,8-tetrahydrofolate + L-serine. It participates in one-carbon metabolism; tetrahydrofolate interconversion. Its pathway is amino-acid biosynthesis; glycine biosynthesis; glycine from L-serine: step 1/1. Catalyzes the reversible interconversion of serine and glycine with tetrahydrofolate (THF) serving as the one-carbon carrier. This reaction serves as the major source of one-carbon groups required for the biosynthesis of purines, thymidylate, methionine, and other important biomolecules. Also exhibits THF-independent aldolase activity toward beta-hydroxyamino acids, producing glycine and aldehydes, via a retro-aldol mechanism. This is Serine hydroxymethyltransferase from Methylobacterium sp. (strain 4-46).